A 395-amino-acid chain; its full sequence is Cation channel sperm-associated protein 3 (395 aa).

At 1 to 48 the chain is on the cytoplasmic side; the sequence is MSQHFHHNPVRVKSGSLFATASEALQARLSKIKRKDKECQAYFRKVIK. Residues 49 to 71 traverse the membrane as a helical segment; it reads STFFQIVMITTVTTNSFLLVLGT. The Extracellular portion of the chain corresponds to 72 to 80; sequence NYDIQFEFF. Residues 81–107 traverse the membrane as a helical segment; it reads RTFEVSELFFVSVYVCEFLMKVYVDPI. A topological domain (cytoplasmic) is located at residue T108. Residues 109-131 traverse the membrane as a helical segment; sequence YWKDGYNILDVIILIILTIPYLL. The Extracellular segment spans residues 132 to 143; the sequence is RKIKGNHSAYLH. A helical membrane pass occupies residues 144 to 160; that stretch reads FADGIQSLRILKLISYS. The Cytoplasmic segment spans residues 161-168; that stretch reads RGIRTLII. A helical membrane pass occupies residues 169-195; that stretch reads AVGETVYTVASVLTLLFLLMFVFAILG. The Extracellular portion of the chain corresponds to 196–216; the sequence is FCLFGVTDRGDLENWGNLASA. The helical; Pore-forming intramembrane region spans 217 to 236; it reads FFTLFSLATVDGWTDLQEEL. Residues 237-242 lie on the Extracellular side of the membrane; that stretch reads DKRKFT. The helical transmembrane segment at 243–268 threads the bilayer; that stretch reads VSRAFTILFILLASFIFLNMFVGVMI. The Cytoplasmic portion of the chain corresponds to 269 to 395; it reads MHTEDSMKKF…ESSSSLSGLS (127 aa).

This sequence belongs to the cation channel sperm-associated (TC 1.A.1.19) family. Component of the CatSper complex or CatSpermasome composed of the core pore-forming members CATSPER1, CATSPER2, CATSPER3 and CATSPER4 as well as auxiliary members CATSPERB, CATSPERG2, CATSPERD, CATSPERE, CATSPERZ, C2CD6/CATSPERT, SLCO6C1, TMEM249, TMEM262 and EFCAB9. HSPA1 may be an additional auxiliary complex member. The core complex members CATSPER1, CATSPER2, CATSPER3 and CATSPER4 form a heterotetrameric channel. The auxiliary CATSPERB, CATSPERG2, CATSPERD and CATSPERE subunits form a pavilion-like structure over the pore which stabilizes the complex through interactions with CATSPER4, CATSPER3, CATSPER1 and CATSPER2 respectively. SLCO6C1 interacts with CATSPERE and TMEM262/CATSPERH interacts with CATSPERB, further stabilizing the complex. C2CD6/CATSPERT interacts at least with CATSPERD and is required for targeting the CatSper complex in the flagellar membrane. As to expression, testis-specific.

It is found in the cell projection. Its subcellular location is the cilium. It localises to the flagellum membrane. The catalysed reaction is Ca(2+)(in) = Ca(2+)(out). With respect to regulation, in contrast to the human ortholog, not activated by progesterone. Activated by intracellular alkalinization. Pore-forming subunit of the CatSper complex, a sperm-specific voltage-gated calcium channel that plays a central role in sperm cell hyperactivation. Controls calcium entry to mediate the hyperactivated motility, a step needed for sperm motility which is essential late in the preparation of sperm for fertilization. The chain is Cation channel sperm-associated protein 3 (Catsper3) from Mus musculus (Mouse).